The sequence spans 676 residues: Serine/threonine-protein kinase Haspin homolog ALK2 (676 aa).

Positions histidine 53–serine 93 are disordered. Residues glutamine 62–threonine 75 show a composition bias toward polar residues. A KEN box motif is present at residues lysine 116–asparagine 118. The D box signature appears at arginine 150–asparagine 158. The interval serine 228 to lysine 312 is disordered. A compositionally biased stretch (polar residues) spans valine 232–asparagine 259. A Protein kinase domain is found at leucine 383–glycine 672. ATP contacts are provided by residues isoleucine 389–glutamine 397 and lysine 430.

This sequence belongs to the protein kinase superfamily. Ser/Thr protein kinase family. Haspin subfamily. Post-translationally, periodically phosphorylated during the cell cycle with a phosphorylation peak during mitosis and hyperphosphorylated after DNA damage.

It catalyses the reaction L-seryl-[protein] + ATP = O-phospho-L-seryl-[protein] + ADP + H(+). It carries out the reaction L-threonyl-[protein] + ATP = O-phospho-L-threonyl-[protein] + ADP + H(+). Functionally, serine/threonine haspin-like protein kinase involved in cell cycle regulation. The chain is Serine/threonine-protein kinase Haspin homolog ALK2 (ALK2) from Saccharomyces cerevisiae (strain ATCC 204508 / S288c) (Baker's yeast).